A 198-amino-acid chain; its full sequence is Beta-crystallin A1 (198 aa).

The N-terminal arm stretch occupies residues 1 to 13 (MLYLVLFLVPFNS). 2 Beta/gamma crystallin 'Greek key' domains span residues 14–53 (IQIT…KVEC) and 54–100 (GAWI…RPIC). An S-glutathionyl cysteine; alternate mark is found at Cys-65 and Cys-100. 2 positions are modified to S-methylcysteine; alternate: Cys-65 and Cys-100. A connecting peptide region spans residues 101–106 (SANHKE). 2 consecutive Beta/gamma crystallin 'Greek key' domains span residues 107-148 (SKIT…KIQC) and 149-197 (GAWV…RRIQ).

Belongs to the beta/gamma-crystallin family. As to quaternary structure, homo/heterodimer, or complexes of higher-order. The structure of beta-crystallin oligomers seems to be stabilized through interactions between the N-terminal arms. Interacts with CRYBA1.

Its function is as follows. Crystallins are the dominant structural components of the vertebrate eye lens. The sequence is that of Beta-crystallin A1 from Mus musculus (Mouse).